The chain runs to 266 residues: Movement protein (266 aa).

Residues 212–227 are compositionally biased toward basic residues; the sequence is KTKKGKKRKKEKKKRV. Residues 212–266 form a disordered region; sequence KTKKGKKRKKEKKKRVVGNSVNNKKINNSGKKGLKVEEIEDNVSDDESIASSSTF. The segment covering 228–242 has biased composition (low complexity); it reads VGNSVNNKKINNSGK. Residues 249–259 are compositionally biased toward acidic residues; it reads EIEDNVSDDES.

Belongs to the tobamovirus movement protein family.

It is found in the host cytoplasm. The protein localises to the host cytoskeleton. The protein resides in the host cell junction. Its subcellular location is the host plasmodesma. Functionally, transports viral genome to neighboring plant cells directly through plasmosdesmata, without any budding. The movement protein allows efficient cell to cell propagation, by bypassing the host cell wall barrier. Forms a ribonucleoprotein complex with viral RNA. Binds microtubules and modulates microtubule stability. Can bind double-stranded DNA. In Capsicum annuum (Capsicum pepper), this protein is Movement protein (MP).